The sequence spans 462 residues: A-type ATP synthase subunit B (462 aa).

It belongs to the ATPase alpha/beta chains family. In terms of assembly, has multiple subunits with at least A(3), B(3), C, D, E, F, H, I and proteolipid K(x).

It is found in the cell membrane. Its function is as follows. Component of the A-type ATP synthase that produces ATP from ADP in the presence of a proton gradient across the membrane. The B chain is a regulatory subunit. This is A-type ATP synthase subunit B from Methanococcus maripaludis (strain DSM 14266 / JCM 13030 / NBRC 101832 / S2 / LL).